A 66-amino-acid chain; its full sequence is UPF0370 protein YpfN (66 aa).

A helical transmembrane segment spans residues 4–24 (LAKYWWILVIVFLVGVLLNVI). The tract at residues 39 to 66 (KPELPPHRDFNDKWDDDDDWPKKDQPKK) is disordered. Residues 42 to 51 (LPPHRDFNDK) are compositionally biased toward basic and acidic residues.

It belongs to the UPF0370 family.

It localises to the cell membrane. This Escherichia coli O139:H28 (strain E24377A / ETEC) protein is UPF0370 protein YpfN.